The following is a 933-amino-acid chain: Progesterone receptor (933 aa).

Positions methionine 1–leucine 164 are AF3; mediates transcriptional activation. Residues methionine 1–valine 256 are disordered. A modulating, Pro-Rich region spans residues methionine 1–isoleucine 566. A Phosphoserine modification is found at serine 20. The LXXL motif 1 motif lies at leucine 55–leucine 59. Serine 81 bears the Phosphoserine mark. The LXXL motif 2 signature appears at leucine 115–leucine 119. Residues serine 130 and serine 162 each carry the phosphoserine modification. Residues methionine 165–histidine 305 are mediates transcriptional transrepression. The Nuclear localization signal signature appears at lysine 183–arginine 187. A phosphoserine mark is found at serine 190 and serine 213. The span at glutamate 220 to glutamate 231 shows a compositional bias: acidic residues. Positions serine 232 to glycine 246 are enriched in low complexity. Serine 294 carries the post-translational modification Phosphoserine; by MAPK1. The segment at glycine 331–serine 378 is disordered. Positions alanine 335–serine 350 are enriched in low complexity. The residue at position 345 (serine 345) is a Phosphoserine; by MAPK. Lysine 388 is covalently cross-linked (Glycyl lysine isopeptide (Lys-Gly) (interchain with G-Cter in SUMO); alternate). A Glycyl lysine isopeptide (Lys-Gly) (interchain with G-Cter in ubiquitin); alternate cross-link involves residue lysine 388. Serine 400 is modified (phosphoserine; by CDK2). The interval proline 415 to serine 452 is disordered. A compositionally biased stretch (pro residues) spans proline 418–arginine 433. Positions proline 434–serine 452 are enriched in low complexity. Residues serine 456 to arginine 546 are AF1; mediates transcriptional activation. A Glycyl lysine isopeptide (Lys-Gly) (interchain with G-Cter in SUMO) cross-link involves residue lysine 531. NR C4-type zinc fingers lie at residues cysteine 567–cysteine 587 and cysteine 603–cysteine 627. A DNA-binding region (nuclear receptor) is located at residues cysteine 567–phenylalanine 639. Residue serine 676 is modified to Phosphoserine. One can recognise an NR LBD domain in the interval glutamine 679–isoleucine 913. Residues leucine 687 to lysine 933 are AF2; mediates transcriptional activation. Arginine 766 lines the progesterone pocket.

Belongs to the nuclear hormone receptor family. As to quaternary structure, interacts with SMARD1 and UNC45A. Interacts with CUEDC2; the interaction promotes ubiquitination, decreases sumoylation, and represses transcriptional activity. Interacts with PIAS3; the interaction promotes sumoylation of PR in a hormone-dependent manner, inhibits DNA-binding, and alters nuclear export. Interacts with SP1; the interaction requires ligand-induced phosphorylation on Ser-345 by ERK1/2-MAPK. Interacts with PRMT2. Interacts with NCOA2 and NCOA1. Interacts with KLF9. Interacts with GTF2B. In terms of processing, phosphorylated on multiple serine sites. Several of these sites are hormone-dependent. Phosphorylation on Ser-294 is highly hormone-dependent and modulates ubiquitination and sumoylation on Lys-388. Phosphorylation on Ser-102 and Ser-345 also requires induction by hormone. Basal phosphorylation on Ser-81, Ser-162, Ser-190 and Ser-400 is increased in response to progesterone and can be phosphorylated in vitro by the CDK2-A1 complex. Increased levels of phosphorylation on Ser-400 also in the presence of EGF, heregulin, IGF, PMA and FBS. Phosphorylation at this site by CDK2 is ligand-independent, and increases nuclear translocation and transcriptional activity. Phosphorylation at Ser-162 and Ser-294, but not at Ser-190, is impaired during the G(2)/M phase of the cell cycle. Phosphorylation on Ser-345 by ERK1/2 MAPK is required for interaction with SP1. Sumoylation is hormone-dependent and represses transcriptional activity. Sumoylation on all three sites is enhanced by PIAS3. Desumoylated by SENP1. Sumoylation on Lys-388, the main site of sumoylation, is repressed by ubiquitination on the same site, and modulated by phosphorylation at Ser-294. Post-translationally, ubiquitination is hormone-dependent and represses sumoylation on the same site. Promoted by MAPK-mediated phosphorylation on Ser-294. Ubiquitinated by UBR5, leading to its degradation: UBR5 specifically recognizes and binds ligand-bound PGR when it is not associated with coactivators (NCOAs). In presence of NCOAs, the UBR5-degron is not accessible, preventing its ubiquitination and degradation. In terms of processing, palmitoylated by ZDHHC7 and ZDHHC21. Palmitoylation is required for plasma membrane targeting and for rapid intracellular signaling via ERK and AKT kinases and cAMP generation.

Its subcellular location is the nucleus. It localises to the cytoplasm. The steroid hormones and their receptors are involved in the regulation of eukaryotic gene expression and affect cellular proliferation and differentiation in target tissues. Transcriptional activator of several progesteron-dependent promoters in a variety of cell types. Involved in activation of SRC-dependent MAPK signaling on hormone stimulation. This Pan paniscus (Pygmy chimpanzee) protein is Progesterone receptor (PGR).